A 338-amino-acid polypeptide reads, in one-letter code: Glyceraldehyde-3-phosphate dehydrogenase (338 aa).

Residues 12-13 (RI), D34, and R80 each bind NAD(+). Residues 151–153 (SCT), T182, 211–212 (TG), and R234 each bind D-glyceraldehyde 3-phosphate. C152 serves as the catalytic Nucleophile. N316 is an NAD(+) binding site.

It belongs to the glyceraldehyde-3-phosphate dehydrogenase family. Homotetramer.

Its subcellular location is the cytoplasm. It carries out the reaction D-glyceraldehyde 3-phosphate + phosphate + NAD(+) = (2R)-3-phospho-glyceroyl phosphate + NADH + H(+). It functions in the pathway carbohydrate degradation; glycolysis; pyruvate from D-glyceraldehyde 3-phosphate: step 1/5. The protein is Glyceraldehyde-3-phosphate dehydrogenase (GPD) of Paracoccidioides lutzii (strain ATCC MYA-826 / Pb01) (Paracoccidioides brasiliensis).